A 336-amino-acid chain; its full sequence is N-((2S)-2-amino-2-carboxyethyl)-L-glutamate dehydrogenase (336 aa).

Lys-78 (proton donor/acceptor) is an active-site residue. Positions 122 and 242 each coordinate NAD(+).

Belongs to the ornithine cyclodeaminase/mu-crystallin family. Homodimer.

It carries out the reaction N-[(2S)-2-amino-2-carboxyethyl]-L-glutamate + NAD(+) + H2O = (S)-2,3-diaminopropanoate + 2-oxoglutarate + NADH + H(+). It functions in the pathway siderophore biosynthesis. Functionally, catalyzes the hydrolysis of N-((2S)-2-amino-2-carboxyethyl)-L-glutamate (ACEGA) to form L-2,3-diaminopropionic acid and 2-oxoglutarate. Involved in the biosynthesis of L-2,3-diaminopropionic acid (L-Dap), a precursor of staphyloferrin B and antibiotics. This Staphylococcus aureus (strain NCTC 8325 / PS 47) protein is N-((2S)-2-amino-2-carboxyethyl)-L-glutamate dehydrogenase.